A 511-amino-acid chain; its full sequence is DNA nucleotidylexotransferase (511 aa).

The segment at 1 to 26 (MDPLQTAHAGPRKKRPRQTGASMAST) is disordered. The Nuclear localization signal signature appears at 11-17 (PRKKRPR). One can recognise a BRCT domain in the interval 27–124 (PQDVRFQDLV…KPVETTGKHQ (98 aa)). Position 134 is a phosphoserine (Ser134). The interval 151-511 (SQYACQRRTT…DYIEPSERNA (361 aa)) is mediates interaction with DNTTIP2. Residues 258-262 (VGLKT) form an involved in DNA binding region. A 2'-deoxyribonucleoside 5'-triphosphate contacts are provided by residues 333 to 338 (GFRRGK) and 342 to 345 (HDVD). Mg(2+)-binding residues include Asp343, Asp345, and Asp435. A 2'-deoxyribonucleoside 5'-triphosphate is bound at residue 450 to 451 (GW).

Belongs to the DNA polymerase type-X family. Interacts with PRP19 and DNTTIP1. Forms a ternary complex with DNTTIP2 and core histone. Released from this complex by PCNA. Interacts with TRERF1. Mg(2+) is required as a cofactor.

The protein resides in the nucleus. The catalysed reaction is DNA(n) + a 2'-deoxyribonucleoside 5'-triphosphate = DNA(n+1) + diphosphate. In terms of biological role, template-independent DNA polymerase which catalyzes the random addition of deoxynucleoside 5'-triphosphate to the 3'-end of a DNA initiator. One of the in vivo functions of this enzyme is the addition of nucleotides at the junction (N region) of rearranged Ig heavy chain and T-cell receptor gene segments during the maturation of B- and T-cells. The polypeptide is DNA nucleotidylexotransferase (DNTT) (Eulemur macaco (Black lemur)).